We begin with the raw amino-acid sequence, 284 residues long: Release factor glutamine methyltransferase (284 aa).

Residues 125-129 (GVGSG), E148, and N190 each bind S-adenosyl-L-methionine. Residue 190 to 193 (NPPY) coordinates substrate.

Belongs to the protein N5-glutamine methyltransferase family. PrmC subfamily.

It carries out the reaction L-glutaminyl-[peptide chain release factor] + S-adenosyl-L-methionine = N(5)-methyl-L-glutaminyl-[peptide chain release factor] + S-adenosyl-L-homocysteine + H(+). Functionally, methylates the class 1 translation termination release factors RF1/PrfA and RF2/PrfB on the glutamine residue of the universally conserved GGQ motif. The chain is Release factor glutamine methyltransferase from Geobacter sulfurreducens (strain ATCC 51573 / DSM 12127 / PCA).